Reading from the N-terminus, the 318-residue chain is NAD kinase (318 aa).

D80 functions as the Proton acceptor in the catalytic mechanism. NAD(+)-binding positions include 80–81 (DG), R85, 155–156 (NE), D185, and 196–201 (TAYAFS).

It belongs to the NAD kinase family. A divalent metal cation serves as cofactor.

It is found in the cytoplasm. The enzyme catalyses NAD(+) + ATP = ADP + NADP(+) + H(+). Functionally, involved in the regulation of the intracellular balance of NAD and NADP, and is a key enzyme in the biosynthesis of NADP. Catalyzes specifically the phosphorylation on 2'-hydroxyl of the adenosine moiety of NAD to yield NADP. This Corynebacterium efficiens (strain DSM 44549 / YS-314 / AJ 12310 / JCM 11189 / NBRC 100395) protein is NAD kinase.